A 122-amino-acid polypeptide reads, in one-letter code: Large ribosomal subunit protein uL14 (122 aa).

The protein belongs to the universal ribosomal protein uL14 family. Part of the 50S ribosomal subunit. Forms a cluster with proteins L3 and L19. In the 70S ribosome, L14 and L19 interact and together make contacts with the 16S rRNA in bridges B5 and B8.

Functionally, binds to 23S rRNA. Forms part of two intersubunit bridges in the 70S ribosome. This is Large ribosomal subunit protein uL14 from Bacillus mycoides (strain KBAB4) (Bacillus weihenstephanensis).